A 772-amino-acid chain; its full sequence is C-Maf-inducing protein (772 aa).

Residues 52 to 160 (KLLQEGDIQV…WFHSLQWKKK (109 aa)) form the PH domain. 4 LRR repeats span residues 662-683 (NLEN…QLIK), 686-706 (SLKQ…RVLS), 711-731 (TLQV…LALS), and 735-755 (SLCN…EDLK).

Its subcellular location is the nucleus. The protein localises to the cytoplasm. In terms of biological role, plays a role in T-cell signaling pathway. In Xenopus laevis (African clawed frog), this protein is C-Maf-inducing protein (cmip).